A 261-amino-acid polypeptide reads, in one-letter code: tRNA pseudouridine synthase A (261 aa).

Asp51 serves as the catalytic Nucleophile. Tyr109 contributes to the substrate binding site.

Belongs to the tRNA pseudouridine synthase TruA family. As to quaternary structure, homodimer.

The enzyme catalyses uridine(38/39/40) in tRNA = pseudouridine(38/39/40) in tRNA. Its function is as follows. Formation of pseudouridine at positions 38, 39 and 40 in the anticodon stem and loop of transfer RNAs. The chain is tRNA pseudouridine synthase A from Shewanella loihica (strain ATCC BAA-1088 / PV-4).